The chain runs to 138 residues: Acyl carrier protein 1, chloroplastic (138 aa).

A chloroplast-targeting transit peptide spans 1–56 (MASLSATTTVRVQPSSSSLHKLSQGNGRCSSIVCLDWGKSSFPTLRTSRRRSFISA). Residues 59 to 134 (KETIDKVCDI…QAADVIESLL (76 aa)) enclose the Carrier domain. At S94 the chain carries O-(pantetheine 4'-phosphoryl)serine.

The protein belongs to the acyl carrier protein (ACP) family. 4'-phosphopantetheine is transferred from CoA to a specific serine of apo-ACP by acpS. This modification is essential for activity because fatty acids are bound in thioester linkage to the sulfhydryl of the prosthetic group.

It localises to the plastid. The protein resides in the chloroplast. Its pathway is lipid metabolism; fatty acid biosynthesis. Functionally, carrier of the growing fatty acid chain in fatty acid biosynthesis. This Spinacia oleracea (Spinach) protein is Acyl carrier protein 1, chloroplastic (ACL1.1).